A 256-amino-acid chain; its full sequence is 5'-nucleotidase YutF (256 aa).

This sequence belongs to the HAD-like hydrolase superfamily. NagD family. As to quaternary structure, homodimer. Mg(2+) serves as cofactor.

It localises to the cytoplasm. The enzyme catalyses a ribonucleoside 5'-phosphate + H2O = a ribonucleoside + phosphate. It carries out the reaction XMP + H2O = xanthosine + phosphate. Its function is as follows. Catalyzes the hydrolysis of various purine and pyrimidine 5'-nucleotides, showing preference for 5'-nucleoside monophosphates and exhibiting the highest catalytic activity toward 5'-XMP. Also shows a relatively high phosphohydrolase activity toward the nucleotide precursors ribose-5-phosphate (R5P) and 5-phosphoribosyl-1-pyrophosphate (PRPP), and toward the non-natural substrate p-nitrophenyl phosphate (pNPP). The polypeptide is 5'-nucleotidase YutF (yutF) (Bacillus subtilis (strain 168)).